The chain runs to 239 residues: Phosphoribosylaminoimidazole-succinocarboxamide synthase (239 aa).

The protein belongs to the SAICAR synthetase family.

The catalysed reaction is 5-amino-1-(5-phospho-D-ribosyl)imidazole-4-carboxylate + L-aspartate + ATP = (2S)-2-[5-amino-1-(5-phospho-beta-D-ribosyl)imidazole-4-carboxamido]succinate + ADP + phosphate + 2 H(+). The protein operates within purine metabolism; IMP biosynthesis via de novo pathway; 5-amino-1-(5-phospho-D-ribosyl)imidazole-4-carboxamide from 5-amino-1-(5-phospho-D-ribosyl)imidazole-4-carboxylate: step 1/2. The polypeptide is Phosphoribosylaminoimidazole-succinocarboxamide synthase (Acinetobacter baumannii (strain AB307-0294)).